The following is a 102-amino-acid chain: MYAVIRTGGKQYKVSEGDFLKVEKLEGAVGDTVELKDVLMVGGETVAIGTPLVPSASVVGRIVDQGKDKKILVFKSKRRKNFRKMYGHRQPRTVLKIEKINA.

Belongs to the bacterial ribosomal protein bL21 family. Part of the 50S ribosomal subunit. Contacts protein L20.

In terms of biological role, this protein binds to 23S rRNA in the presence of protein L20. The chain is Large ribosomal subunit protein bL21 from Geobacter sulfurreducens (strain ATCC 51573 / DSM 12127 / PCA).